The primary structure comprises 61 residues: Small ribosomal subunit protein uS14 (61 aa).

Positions 24, 27, 40, and 43 each coordinate Zn(2+).

It belongs to the universal ribosomal protein uS14 family. Zinc-binding uS14 subfamily. Part of the 30S ribosomal subunit. Contacts proteins S3 and S10. It depends on Zn(2+) as a cofactor.

Functionally, binds 16S rRNA, required for the assembly of 30S particles and may also be responsible for determining the conformation of the 16S rRNA at the A site. This chain is Small ribosomal subunit protein uS14, found in Trichlorobacter lovleyi (strain ATCC BAA-1151 / DSM 17278 / SZ) (Geobacter lovleyi).